We begin with the raw amino-acid sequence, 570 residues long: Proline--tRNA ligase (570 aa).

This sequence belongs to the class-II aminoacyl-tRNA synthetase family. ProS type 1 subfamily. In terms of assembly, homodimer.

It is found in the cytoplasm. It carries out the reaction tRNA(Pro) + L-proline + ATP = L-prolyl-tRNA(Pro) + AMP + diphosphate. Its function is as follows. Catalyzes the attachment of proline to tRNA(Pro) in a two-step reaction: proline is first activated by ATP to form Pro-AMP and then transferred to the acceptor end of tRNA(Pro). As ProRS can inadvertently accommodate and process non-cognate amino acids such as alanine and cysteine, to avoid such errors it has two additional distinct editing activities against alanine. One activity is designated as 'pretransfer' editing and involves the tRNA(Pro)-independent hydrolysis of activated Ala-AMP. The other activity is designated 'posttransfer' editing and involves deacylation of mischarged Ala-tRNA(Pro). The misacylated Cys-tRNA(Pro) is not edited by ProRS. This Shewanella sp. (strain MR-7) protein is Proline--tRNA ligase.